The chain runs to 206 residues: Small ribosomal subunit protein uS4 (206 aa).

Residues 96-156 (NRLDNVTYRI…KNSKLQSRIK (61 aa)) enclose the S4 RNA-binding domain.

This sequence belongs to the universal ribosomal protein uS4 family. Part of the 30S ribosomal subunit. Contacts protein S5. The interaction surface between S4 and S5 is involved in control of translational fidelity.

One of the primary rRNA binding proteins, it binds directly to 16S rRNA where it nucleates assembly of the body of the 30S subunit. In terms of biological role, with S5 and S12 plays an important role in translational accuracy. The sequence is that of Small ribosomal subunit protein uS4 from Buchnera aphidicola subsp. Baizongia pistaciae (strain Bp).